We begin with the raw amino-acid sequence, 95 residues long: Aspartyl/glutamyl-tRNA(Asn/Gln) amidotransferase subunit C (95 aa).

Belongs to the GatC family. As to quaternary structure, heterotrimer of A, B and C subunits.

It catalyses the reaction L-glutamyl-tRNA(Gln) + L-glutamine + ATP + H2O = L-glutaminyl-tRNA(Gln) + L-glutamate + ADP + phosphate + H(+). The enzyme catalyses L-aspartyl-tRNA(Asn) + L-glutamine + ATP + H2O = L-asparaginyl-tRNA(Asn) + L-glutamate + ADP + phosphate + 2 H(+). Its function is as follows. Allows the formation of correctly charged Asn-tRNA(Asn) or Gln-tRNA(Gln) through the transamidation of misacylated Asp-tRNA(Asn) or Glu-tRNA(Gln) in organisms which lack either or both of asparaginyl-tRNA or glutaminyl-tRNA synthetases. The reaction takes place in the presence of glutamine and ATP through an activated phospho-Asp-tRNA(Asn) or phospho-Glu-tRNA(Gln). The polypeptide is Aspartyl/glutamyl-tRNA(Asn/Gln) amidotransferase subunit C (Vesicomyosocius okutanii subsp. Calyptogena okutanii (strain HA)).